Consider the following 488-residue polypeptide: MVIKNIDAATVAKKFLVRGYNIDPKAAELICKSGLFSDELVDKICRIANGGFIIEKSVVEEFLRNLSNLKPATLTPRPEERKVEEVKASCIALKVIKDITGKSSCQGNVEDFLMYFNSRLEKLSRIIRSRVNTTPIAHAGKVRGNVSVVGMVNEVYERGDKCYIRLEDTTGTITCVATGKNAEVARELLGDEVIGVTGLLKGSSLYANRIVFPDVPINGNGEKKRDFYIVFLSDTHFGSKEFLEKEWEMFVRWLKGEVGGKKSQNLAEKVKYIVIAGDIVDGIGVYPGQEDDLAISDIYGQYEFAASHLDEIPKEIKIIVSPGNHDAVRQAEPQPAFEGEIRSLFPKNVEHVGNPAYVDIEGVKVLIYHGRSIDDIISKIPRLSYDEPQKVMEELLKRRHLSPIYGGRTPLAPEREDYLVIEDVPDILHCGHIHTYGTGFYRGVFMVNSSTWQAQTEFQKKVNLNPMPGNVAVYRPGGEVIRLRFYGE.

It belongs to the DNA polymerase delta/II small subunit family. Heterodimer of a large subunit and a small subunit.

The enzyme catalyses DNA(n) + a 2'-deoxyribonucleoside 5'-triphosphate = DNA(n+1) + diphosphate. It carries out the reaction Exonucleolytic cleavage in the 3'- to 5'-direction to yield nucleoside 5'-phosphates.. In terms of biological role, possesses two activities: a DNA synthesis (polymerase) and an exonucleolytic activity that degrades single-stranded DNA in the 3' to 5' direction. Has a template-primer preference which is characteristic of a replicative DNA polymerase. The sequence is that of DNA polymerase II small subunit (polB) from Archaeoglobus fulgidus (strain ATCC 49558 / DSM 4304 / JCM 9628 / NBRC 100126 / VC-16).